The sequence spans 76 residues: Zinc finger protein 706 (76 aa).

Residues 1–13 (MARGQQKIQSQQK) are compositionally biased toward low complexity. Disordered stretches follow at residues 1 to 32 (MARG…QKAA) and 53 to 76 (TFKQ…DVQA). Positions 14 to 25 (NAKKQAGQKKKQ) are enriched in basic residues. The segment at 39 to 62 (YTCTVCRTQMPDPKTFKQHFESKH) adopts a C2H2-type zinc-finger fold. Positions 53-62 (TFKQHFESKH) are enriched in basic and acidic residues.

It localises to the cytoplasm. The protein resides in the nucleus. Transcription repressor involved in the exit of embryonic stem cells (ESCs) from self-renewal. Acts by repressing expression of KLF4. The protein is Zinc finger protein 706 of Homo sapiens (Human).